The primary structure comprises 320 residues: MNTPAVRFAARTVRVKAPGKINVSLDVGPRRPDGYHSVASVYLAVSLYEEVAATSTETPGITVSLSPDSTLDLDAVDIPLDASNLAYRAAAIMADVSEHATGVHLEITKRVPVAGGMGGGSADAAATLLACDALWNSGLSREELAHLAAELGADVPFSLLGGTAVGLGVGDQLSPALAKAKTHWVLVTADFGLSTPEVFRTLDRLREAEGVDADEPTGVDPNILAALRGGDADALSRILVNDLQRASIELAPSLRDTLGIGESHGAIAGIVSGSGPTVALLADDSVAAEALAEDLQHQGLSALAVHGPVPGARIISDTLL.

Lys-20 is a catalytic residue. Residue 112-122 (PVAGGMGGGSA) participates in ATP binding. Residue Asp-154 is part of the active site.

The protein belongs to the GHMP kinase family. IspE subfamily.

The enzyme catalyses 4-CDP-2-C-methyl-D-erythritol + ATP = 4-CDP-2-C-methyl-D-erythritol 2-phosphate + ADP + H(+). It participates in isoprenoid biosynthesis; isopentenyl diphosphate biosynthesis via DXP pathway; isopentenyl diphosphate from 1-deoxy-D-xylulose 5-phosphate: step 3/6. In terms of biological role, catalyzes the phosphorylation of the position 2 hydroxy group of 4-diphosphocytidyl-2C-methyl-D-erythritol. The chain is 4-diphosphocytidyl-2-C-methyl-D-erythritol kinase from Pseudarthrobacter chlorophenolicus (strain ATCC 700700 / DSM 12829 / CIP 107037 / JCM 12360 / KCTC 9906 / NCIMB 13794 / A6) (Arthrobacter chlorophenolicus).